Reading from the N-terminus, the 395-residue chain is Chorismate synthase (395 aa).

Positions 40 and 46 each coordinate NADP(+). The interval Leu-98 to Met-120 is disordered. FMN-binding positions include Arg-134 to Ser-136, Gln-256 to Ala-257, Gly-301, Lys-316 to Ser-320, and Arg-342.

It belongs to the chorismate synthase family. As to quaternary structure, homotetramer. The cofactor is FMNH2.

It carries out the reaction 5-O-(1-carboxyvinyl)-3-phosphoshikimate = chorismate + phosphate. It participates in metabolic intermediate biosynthesis; chorismate biosynthesis; chorismate from D-erythrose 4-phosphate and phosphoenolpyruvate: step 7/7. Catalyzes the anti-1,4-elimination of the C-3 phosphate and the C-6 proR hydrogen from 5-enolpyruvylshikimate-3-phosphate (EPSP) to yield chorismate, which is the branch point compound that serves as the starting substrate for the three terminal pathways of aromatic amino acid biosynthesis. This reaction introduces a second double bond into the aromatic ring system. This is Chorismate synthase from Bifidobacterium longum subsp. infantis (strain ATCC 15697 / DSM 20088 / JCM 1222 / NCTC 11817 / S12).